A 373-amino-acid polypeptide reads, in one-letter code: UDP-N-acetylglucosamine--N-acetylmuramyl-(pentapeptide) pyrophosphoryl-undecaprenol N-acetylglucosamine transferase (373 aa).

UDP-N-acetyl-alpha-D-glucosamine is bound by residues 13-15 (TGG), N124, R165, S192, and Q293.

It belongs to the glycosyltransferase 28 family. MurG subfamily.

It is found in the cell inner membrane. The catalysed reaction is di-trans,octa-cis-undecaprenyl diphospho-N-acetyl-alpha-D-muramoyl-L-alanyl-D-glutamyl-meso-2,6-diaminopimeloyl-D-alanyl-D-alanine + UDP-N-acetyl-alpha-D-glucosamine = di-trans,octa-cis-undecaprenyl diphospho-[N-acetyl-alpha-D-glucosaminyl-(1-&gt;4)]-N-acetyl-alpha-D-muramoyl-L-alanyl-D-glutamyl-meso-2,6-diaminopimeloyl-D-alanyl-D-alanine + UDP + H(+). It participates in cell wall biogenesis; peptidoglycan biosynthesis. Its function is as follows. Cell wall formation. Catalyzes the transfer of a GlcNAc subunit on undecaprenyl-pyrophosphoryl-MurNAc-pentapeptide (lipid intermediate I) to form undecaprenyl-pyrophosphoryl-MurNAc-(pentapeptide)GlcNAc (lipid intermediate II). The sequence is that of UDP-N-acetylglucosamine--N-acetylmuramyl-(pentapeptide) pyrophosphoryl-undecaprenol N-acetylglucosamine transferase from Sinorhizobium fredii (strain NBRC 101917 / NGR234).